The chain runs to 383 residues: uncharacterized protein (383 aa).

Belongs to the peptidase M20 family.

This is an uncharacterized protein from Staphylococcus aureus (strain N315).